We begin with the raw amino-acid sequence, 250 residues long: Cell division protein ZapD (250 aa).

The protein belongs to the ZapD family. Interacts with FtsZ.

It localises to the cytoplasm. Its function is as follows. Cell division factor that enhances FtsZ-ring assembly. Directly interacts with FtsZ and promotes bundling of FtsZ protofilaments, with a reduction in FtsZ GTPase activity. The polypeptide is Cell division protein ZapD (Pectobacterium carotovorum subsp. carotovorum (strain PC1)).